Reading from the N-terminus, the 357-residue chain is DNA replication and repair protein RecF (357 aa).

ATP is bound at residue 30-37; it reads GANGSGKT.

It belongs to the RecF family.

It is found in the cytoplasm. The RecF protein is involved in DNA metabolism; it is required for DNA replication and normal SOS inducibility. RecF binds preferentially to single-stranded, linear DNA. It also seems to bind ATP. The chain is DNA replication and repair protein RecF from Salmonella paratyphi B (strain ATCC BAA-1250 / SPB7).